The primary structure comprises 404 residues: uncharacterized protein (404 aa).

12 consecutive transmembrane segments (helical) span residues F16–M36, A49–G69, P79–P99, I110–I130, G133–G153, W166–I186, F221–V241, A252–G272, I283–L303, I307–W327, L342–W362, and G364–L384.

Belongs to the major facilitator superfamily.

It is found in the cell membrane. This is an uncharacterized protein from Bacillus subtilis (strain 168).